We begin with the raw amino-acid sequence, 152 residues long: Large ribosomal subunit protein bL9 (152 aa).

It belongs to the bacterial ribosomal protein bL9 family.

Functionally, binds to the 23S rRNA. The protein is Large ribosomal subunit protein bL9 of Thermosynechococcus vestitus (strain NIES-2133 / IAM M-273 / BP-1).